The primary structure comprises 829 residues: Protein roadkill (829 aa).

3 stretches are compositionally biased toward low complexity: residues 24–36 (EQQQ…QQQQ), 122–140 (TPAA…QAAP), and 266–288 (SSSS…SSSS). Disordered stretches follow at residues 24 to 47 (EQQQ…CCEN), 106 to 142 (SSLQ…APSV), 266 to 296 (SSSS…SHHS), and 313 to 400 (HLNQ…NQQQ). Residues 313 to 322 (HLNQQQHHHP) show a composition bias toward basic residues. 3 stretches are compositionally biased toward low complexity: residues 323 to 353 (LSAS…QQQH), 372 to 382 (SSSSSSSSSSS), and 389 to 400 (SSSSSNSNNQQQ). The MATH domain occupies 486-616 (KFSYMWTINN…EDKLTIFCEV (131 aa)). The BTB domain occupies 655 to 722 (SDVTLSVGGR…IYTGKAPNLE (68 aa)).

The protein belongs to the Tdpoz family. Interacts with ci and gft/CUL3. As to expression, expressed near the anterio-posterior compartment boundary of antenna, leg and wing disks.

Its subcellular location is the nucleus. It participates in protein modification; protein ubiquitination. In terms of biological role, involved in segment polarity. In complex with gft/CUL3, promotes ubiquitination of ci and its subsequent degradation by the proteasome, which results in hh signaling attenuation. This regulation may be important during eye formation for proper packing of ommatidia into a hexagonal array. The protein is Protein roadkill (rdx) of Drosophila melanogaster (Fruit fly).